A 440-amino-acid chain; its full sequence is Xylose isomerase (440 aa).

Active-site residues include His101 and Asp104. Mg(2+)-binding residues include Glu232, Glu268, His271, Asp296, Asp307, Asp309, and Asp339.

It belongs to the xylose isomerase family. In terms of assembly, homotetramer. Mg(2+) is required as a cofactor.

The protein localises to the cytoplasm. The catalysed reaction is alpha-D-xylose = alpha-D-xylulofuranose. The sequence is that of Xylose isomerase from Escherichia fergusonii (strain ATCC 35469 / DSM 13698 / CCUG 18766 / IAM 14443 / JCM 21226 / LMG 7866 / NBRC 102419 / NCTC 12128 / CDC 0568-73).